The primary structure comprises 42 residues: MSNTGTTGRIPLWLVGTVVGIAALTLLSVFFYGSYVGLGSSL.

The chain crosses the membrane as a helical span at residues 10–30 (IPLWLVGTVVGIAALTLLSVF).

It belongs to the PsbJ family. In terms of assembly, PSII is composed of 1 copy each of membrane proteins PsbA, PsbB, PsbC, PsbD, PsbE, PsbF, PsbH, PsbI, PsbJ, PsbK, PsbL, PsbM, PsbT, PsbX, PsbY, PsbZ, Psb30/Ycf12, at least 3 peripheral proteins of the oxygen-evolving complex and a large number of cofactors. It forms dimeric complexes.

Its subcellular location is the plastid. The protein localises to the chloroplast thylakoid membrane. One of the components of the core complex of photosystem II (PSII). PSII is a light-driven water:plastoquinone oxidoreductase that uses light energy to abstract electrons from H(2)O, generating O(2) and a proton gradient subsequently used for ATP formation. It consists of a core antenna complex that captures photons, and an electron transfer chain that converts photonic excitation into a charge separation. This Tupiella akineta (Green alga) protein is Photosystem II reaction center protein J.